The sequence spans 611 residues: Large ribosomal subunit assembly factor BipA (611 aa).

The region spanning 7–202 (KNLRNIAIIA…AIVKYTPPPT (196 aa)) is the tr-type G domain. GTP is bound by residues 19-24 (DHGKTT) and 132-135 (NKID).

It belongs to the TRAFAC class translation factor GTPase superfamily. Classic translation factor GTPase family. BipA subfamily. In terms of assembly, monomer.

The protein resides in the cytoplasm. The enzyme catalyses GTP + H2O = GDP + phosphate + H(+). A 50S ribosomal subunit assembly protein with GTPase activity, required for 50S subunit assembly at low temperatures, may also play a role in translation. Binds GTP and analogs. Binds the 70S ribosome between the 30S and 50S subunits, in a similar position as ribosome-bound EF-G; it contacts a number of ribosomal proteins, both rRNAs and the A-site tRNA. The polypeptide is Large ribosomal subunit assembly factor BipA (Buchnera aphidicola subsp. Baizongia pistaciae (strain Bp)).